The sequence spans 229 residues: Putative N-acetylmannosamine-6-phosphate 2-epimerase (229 aa).

This sequence belongs to the NanE family.

The catalysed reaction is an N-acyl-D-glucosamine 6-phosphate = an N-acyl-D-mannosamine 6-phosphate. It functions in the pathway amino-sugar metabolism; N-acetylneuraminate degradation; D-fructose 6-phosphate from N-acetylneuraminate: step 3/5. Functionally, converts N-acetylmannosamine-6-phosphate (ManNAc-6-P) to N-acetylglucosamine-6-phosphate (GlcNAc-6-P). The sequence is that of Putative N-acetylmannosamine-6-phosphate 2-epimerase from Salmonella agona (strain SL483).